A 256-amino-acid chain; its full sequence is uncharacterized protein (256 aa).

The S4 RNA-binding domain maps to 16–83 (VRLQKILSRA…DSLVYLALNK (68 aa)). The Nucleophile role is filled by Asp-121.

Belongs to the pseudouridine synthase RsuA family.

The enzyme catalyses a uridine in RNA = a pseudouridine in RNA. This is an uncharacterized protein from Mycobacterium leprae (strain TN).